The chain runs to 246 residues: tRNA (guanine-N(1)-)-methyltransferase (246 aa).

Glycine 114 provides a ligand contact to S-adenosyl-L-methionine.

Belongs to the RNA methyltransferase TrmD family. Homodimer.

It localises to the cytoplasm. The catalysed reaction is guanosine(37) in tRNA + S-adenosyl-L-methionine = N(1)-methylguanosine(37) in tRNA + S-adenosyl-L-homocysteine + H(+). In terms of biological role, specifically methylates guanosine-37 in various tRNAs. The chain is tRNA (guanine-N(1)-)-methyltransferase from Novosphingobium aromaticivorans (strain ATCC 700278 / DSM 12444 / CCUG 56034 / CIP 105152 / NBRC 16084 / F199).